Here is a 146-residue protein sequence, read N- to C-terminus: Phage-like element PBSX protein XkdJ (146 aa).

This sequence to B.subtilis YqbJ.

The protein is Phage-like element PBSX protein XkdJ (xkdJ) of Bacillus subtilis (strain 168).